Consider the following 284-residue polypeptide: Insulin-like growth factor-binding protein 2 (284 aa).

Positions 1 to 21 are cleaved as a signal peptide; the sequence is MGLSRYLLGLLLGVLCTPAPA. The IGFBP N-terminal domain maps to 23 to 106; that stretch reads VLFRCPPCSP…VLGLGTCGKR (84 aa). Intrachain disulfides connect C27-C56, C30-C58, C38-C59, C47-C62, C70-C83, and C77-C103. The interval 108 to 184 is disordered; it reads DTEYGSSQER…KSEDKKRPAR (77 aa). A compositionally biased stretch (basic and acidic residues) spans 117–127; the sequence is RGTELPEERSD. Positions 136–145 are enriched in low complexity; the sequence is EAGPAVAGEA. The segment covering 152–180 has biased composition (basic and acidic residues); sequence KKEMKEIAVTRERANEQQRSKSNKSEDKK. A Thyroglobulin type-1 domain is found at 184–266; it reads RSLCQLQLDQ…SPTIRGDPEC (83 aa). Cystine bridges form between C187/C221, C232/C243, and C245/C266. Positions 261–263 match the Cell attachment site motif; the sequence is RGD.

Interacts with igf1 and igf2.

It is found in the secreted. Functionally, IGF-binding proteins prolong the half-life of the IGFs and have been shown to either inhibit or stimulate the growth promoting effects of the IGFs on cell culture. They alter the interaction of IGFs with their cell surface receptors. This chain is Insulin-like growth factor-binding protein 2, found in Xenopus tropicalis (Western clawed frog).